The primary structure comprises 234 residues: BTB/POZ domain-containing protein KCTD5 (234 aa).

Position 2 is an N-acetylalanine (alanine 2). Serine 10 is subject to Phosphoserine. Positions 44–146 constitute a BTB domain; the sequence is KWVRLNVGGT…LVKDKIRERD (103 aa). The interval 213–234 is disordered; it reads PYGTASEPSEKAKILQERGSRM. The span at 220–234 shows a compositional bias: basic and acidic residues; it reads PSEKAKILQERGSRM.

Homopentamer. Interacts (via C-terminus) with GRASP55/GORASP2. Interacts with CUL3 and with ubiquitinated proteins. Interacts with CRY1. As to quaternary structure, (Microbial infection) Interacts with adeno-associated virus 2 (AAV-2) REP proteins.

It is found in the cytoplasm. The protein localises to the cytosol. Its subcellular location is the nucleus. Its interaction with CUL3 suggests that it may act as a substrate adapter in some E3 ligase complex. Does not affect the function of Kv channel Kv2.1/KCNB1, Kv1.2/KCNA2, Kv4.2/KCND2 and Kv3.4/KCNC4. This is BTB/POZ domain-containing protein KCTD5 (KCTD5) from Homo sapiens (Human).